The primary structure comprises 393 residues: S-adenosylmethionine synthase 4 (393 aa).

Glu9 contacts Mg(2+). ATP is bound at residue His15. Residue Glu43 participates in K(+) binding. L-methionine is bound by residues Glu56 and Gln99. ATP is bound by residues 167–169, 235–238, Asp246, 252–253, Ala269, Lys273, and Lys277; these read DGK, SGRF, and RK. Asp246 provides a ligand contact to L-methionine. Position 277 (Lys277) interacts with L-methionine.

Belongs to the AdoMet synthase family. In terms of assembly, homotetramer. Mn(2+) serves as cofactor. Mg(2+) is required as a cofactor. The cofactor is Co(2+). Requires K(+) as cofactor. As to expression, detected in trichomes (at the protein level).

Its subcellular location is the cytoplasm. The catalysed reaction is L-methionine + ATP + H2O = S-adenosyl-L-methionine + phosphate + diphosphate. Its pathway is amino-acid biosynthesis; S-adenosyl-L-methionine biosynthesis; S-adenosyl-L-methionine from L-methionine: step 1/1. In terms of biological role, catalyzes the formation of S-adenosylmethionine from methionine and ATP. The reaction comprises two steps that are both catalyzed by the same enzyme: formation of S-adenosylmethionine (AdoMet) and triphosphate, and subsequent hydrolysis of the triphosphate. The chain is S-adenosylmethionine synthase 4 (METK4) from Arabidopsis thaliana (Mouse-ear cress).